We begin with the raw amino-acid sequence, 356 residues long: uncharacterized protein (356 aa).

The protein resides in the cytoplasm. It is found in the nucleus. This is an uncharacterized protein from Saccharomyces cerevisiae (strain ATCC 204508 / S288c) (Baker's yeast).